We begin with the raw amino-acid sequence, 439 residues long: Xylose isomerase (439 aa).

Residues H101 and D104 contribute to the active site. Positions 232, 268, 271, 296, 307, 309, and 339 each coordinate Mg(2+).

The protein belongs to the xylose isomerase family. In terms of assembly, homotetramer. Mg(2+) serves as cofactor.

Its subcellular location is the cytoplasm. The catalysed reaction is alpha-D-xylose = alpha-D-xylulofuranose. The polypeptide is Xylose isomerase (Serratia proteamaculans (strain 568)).